The chain runs to 174 residues: NADH-quinone oxidoreductase subunit B 2 (174 aa).

Cys-53, Cys-54, Cys-118, and Cys-148 together coordinate [4Fe-4S] cluster.

The protein belongs to the complex I 20 kDa subunit family. In terms of assembly, NDH-1 is composed of 14 different subunits. Subunits NuoB, C, D, E, F, and G constitute the peripheral sector of the complex. It depends on [4Fe-4S] cluster as a cofactor.

The protein resides in the cell inner membrane. The catalysed reaction is a quinone + NADH + 5 H(+)(in) = a quinol + NAD(+) + 4 H(+)(out). Its function is as follows. NDH-1 shuttles electrons from NADH, via FMN and iron-sulfur (Fe-S) centers, to quinones in the respiratory chain. Couples the redox reaction to proton translocation (for every two electrons transferred, four hydrogen ions are translocated across the cytoplasmic membrane), and thus conserves the redox energy in a proton gradient. In Cereibacter sphaeroides (strain ATCC 17025 / ATH 2.4.3) (Rhodobacter sphaeroides), this protein is NADH-quinone oxidoreductase subunit B 2.